The primary structure comprises 1116 residues: Probable chitinase LysM11 (1116 aa).

A LysM domain is found at 233 to 283 (GTYTIQTNDNCAEIAAHFGVTQDDIYDLNEDTWGWAGCGTNDLKADQVICL). One can recognise a GH18 domain in the interval 346 to 719 (FYHVAYFEVF…LGVDPDSDEA (374 aa)). The active-site Proton donor is the glutamate 466. Residues tyrosine 467 and tryptophan 701 each contribute to the chitin site.

This sequence belongs to the glycosyl hydrolase 18 family. Chitinase class V subfamily.

The enzyme catalyses Random endo-hydrolysis of N-acetyl-beta-D-glucosaminide (1-&gt;4)-beta-linkages in chitin and chitodextrins.. Probable chitinase involved in the degradation of chitin, a component of the cell walls of fungi and exoskeletal elements of some animals (including worms and arthropods). Might be involved in manipulation of host defenses for successful infection. The polypeptide is Probable chitinase LysM11 (Penicillium expansum (Blue mold rot fungus)).